The sequence spans 677 residues: Crossover junction endonuclease mus81 (677 aa).

The segment covering 156 to 177 has biased composition (basic and acidic residues); it reads EHGLPMPEDPRTAKADKRKSTD. Positions 156–196 are disordered; that stretch reads EHGLPMPEDPRTAKADKRKSTDGDTEGQPAKKARKPKPYAP. In terms of domain architecture, ERCC4 spans 367–473; that stretch reads QLILDTREVR…NVIYLIEEFA (107 aa).

The protein belongs to the XPF family. Interacts with eme1. Mg(2+) serves as cofactor.

It localises to the nucleus. In terms of biological role, interacts with eme1 to form a DNA structure-specific endonuclease with substrate preference for branched DNA structures with a 5'-end at the branch nick. Typical substrates include 3'-flap structures, D-loops, replication forks and nicked Holliday junctions. May be required in mitosis for the processing of stalled or collapsed replication fork intermediates. May be required in meiosis for the repair of meiosis-specific double strand breaks subsequent to single-end invasion (SEI). The protein is Crossover junction endonuclease mus81 (mus81) of Emericella nidulans (strain FGSC A4 / ATCC 38163 / CBS 112.46 / NRRL 194 / M139) (Aspergillus nidulans).